A 258-amino-acid polypeptide reads, in one-letter code: Imidazole glycerol phosphate synthase subunit HisF (258 aa).

Residues Asp11 and Asp130 contribute to the active site.

It belongs to the HisA/HisF family. As to quaternary structure, heterodimer of HisH and HisF.

It is found in the cytoplasm. It carries out the reaction 5-[(5-phospho-1-deoxy-D-ribulos-1-ylimino)methylamino]-1-(5-phospho-beta-D-ribosyl)imidazole-4-carboxamide + L-glutamine = D-erythro-1-(imidazol-4-yl)glycerol 3-phosphate + 5-amino-1-(5-phospho-beta-D-ribosyl)imidazole-4-carboxamide + L-glutamate + H(+). It participates in amino-acid biosynthesis; L-histidine biosynthesis; L-histidine from 5-phospho-alpha-D-ribose 1-diphosphate: step 5/9. Its function is as follows. IGPS catalyzes the conversion of PRFAR and glutamine to IGP, AICAR and glutamate. The HisF subunit catalyzes the cyclization activity that produces IGP and AICAR from PRFAR using the ammonia provided by the HisH subunit. This is Imidazole glycerol phosphate synthase subunit HisF from Shigella boydii serotype 4 (strain Sb227).